A 135-amino-acid chain; its full sequence is Nucleoside diphosphate kinase (135 aa).

Residues Lys-11, Phe-59, Arg-87, Thr-93, Arg-104, and Asn-114 each contribute to the ATP site. His-117 acts as the Pros-phosphohistidine intermediate in catalysis.

The protein belongs to the NDK family. In terms of assembly, homotetramer. Requires Mg(2+) as cofactor.

It localises to the cytoplasm. The catalysed reaction is a 2'-deoxyribonucleoside 5'-diphosphate + ATP = a 2'-deoxyribonucleoside 5'-triphosphate + ADP. The enzyme catalyses a ribonucleoside 5'-diphosphate + ATP = a ribonucleoside 5'-triphosphate + ADP. In terms of biological role, major role in the synthesis of nucleoside triphosphates other than ATP. The ATP gamma phosphate is transferred to the NDP beta phosphate via a ping-pong mechanism, using a phosphorylated active-site intermediate. The sequence is that of Nucleoside diphosphate kinase from Marinomonas sp. (strain MWYL1).